Here is a 362-residue protein sequence, read N- to C-terminus: Cobalt-precorrin-5B C(1)-methyltransferase (362 aa).

It belongs to the CbiD family.

It catalyses the reaction Co-precorrin-5B + S-adenosyl-L-methionine = Co-precorrin-6A + S-adenosyl-L-homocysteine. It functions in the pathway cofactor biosynthesis; adenosylcobalamin biosynthesis; cob(II)yrinate a,c-diamide from sirohydrochlorin (anaerobic route): step 6/10. Catalyzes the methylation of C-1 in cobalt-precorrin-5B to form cobalt-precorrin-6A. This is Cobalt-precorrin-5B C(1)-methyltransferase from Burkholderia multivorans (strain ATCC 17616 / 249).